We begin with the raw amino-acid sequence, 718 residues long: Peroxisomal bifunctional enzyme (718 aa).

The segment at 1–280 (MAEYLRLPHS…FAEKSANKWS (280 aa)) is enoyl-CoA hydratase / isomerase. An N6-succinyllysine modification is found at Lys-38. Substrate is bound at residue Gly-99. An N6-acetyllysine; alternate mark is found at Lys-163 and Lys-172. 2 positions are modified to N6-succinyllysine; alternate: Lys-163 and Lys-172. The residue at position 181 (Lys-181) is an N6-succinyllysine. 2 positions are modified to N6-acetyllysine; alternate: Lys-189 and Lys-217. An N6-succinyllysine; alternate mark is found at Lys-189 and Lys-217. At Lys-240 the chain carries N6-succinyllysine. Residue Lys-248 is modified to N6-acetyllysine. An N6-succinyllysine modification is found at Lys-252. Lys-274 carries the N6-acetyllysine; alternate modification. Lys-274 carries the N6-succinyllysine; alternate modification. Residues Lys-278, Lys-288, and Lys-329 each carry the N6-succinyllysine modification. The interval 281–567 (TPSGASWKTA…DMLCEAGRFG (287 aa)) is 3-hydroxyacyl-CoA dehydrogenase. Lys-344, Lys-348, Lys-355, and Lys-459 each carry N6-acetyllysine. Lys-527 is subject to N6-succinyllysine. At Thr-543 the chain carries Phosphothreonine. Lys-572 carries the N6-succinyllysine modification. Residues Lys-579, Lys-586, and Lys-705 each carry the N6-acetyllysine; alternate modification. Residues Lys-579, Lys-586, and Lys-705 each carry the N6-succinyllysine; alternate modification. Residues 716 to 718 (SKL) carry the Microbody targeting signal motif. Lys-717 is subject to N6-succinyllysine.

In the N-terminal section; belongs to the enoyl-CoA hydratase/isomerase family. It in the C-terminal section; belongs to the 3-hydroxyacyl-CoA dehydrogenase family. As to quaternary structure, monomer. In terms of processing, acetylated, leading to enhanced enzyme activity. Acetylation is enhanced by up to 80% after treatment either with trichostin A (TCA) or with nicotinamide (NAM) with highest increase on Lys-344. Acetylation and enzyme activity increased by about 1.5% on addition of fatty acids.

Its subcellular location is the peroxisome. It catalyses the reaction a (3S)-3-hydroxyacyl-CoA = a (2E)-enoyl-CoA + H2O. The enzyme catalyses a 4-saturated-(3S)-3-hydroxyacyl-CoA = a (3E)-enoyl-CoA + H2O. The catalysed reaction is a (3Z)-enoyl-CoA = a 4-saturated (2E)-enoyl-CoA. It carries out the reaction a (3E)-enoyl-CoA = a 4-saturated (2E)-enoyl-CoA. It catalyses the reaction a (3S)-3-hydroxyacyl-CoA + NAD(+) = a 3-oxoacyl-CoA + NADH + H(+). The enzyme catalyses (2S,3S)-3-hydroxy-2-methylbutanoyl-CoA = (2E)-2-methylbut-2-enoyl-CoA + H2O. The catalysed reaction is (2E)-dodecenedioyl-CoA + H2O = (3S)-hydroxydodecanedioyl-CoA. It carries out the reaction (3S)-hydroxydodecanedioyl-CoA + NAD(+) = 3-oxododecanedioyl-CoA + NADH + H(+). It catalyses the reaction (2E)-octenedioyl-CoA + H2O = (3S)-hydroxyoctanedioyl-CoA. The enzyme catalyses (3S)-hydroxyoctanedioyl-CoA + NAD(+) = 3-oxooctanedioyl-CoA + NADH + H(+). The catalysed reaction is (2E)-decenedioyl-CoA + H2O = (3S)-hydroxydecanedioyl-CoA. It carries out the reaction (3S)-hydroxydecanedioyl-CoA + NAD(+) = 3-oxodecanedioyl-CoA + NADH + H(+). It catalyses the reaction (2E)-tetradecenedioyl-CoA + H2O = (3S)-hydroxytetradecanedioyl-CoA. The enzyme catalyses (3S)-hydroxytetradecanedioyl-CoA + NAD(+) = 3-oxotetradecanedioyl-CoA + NADH + H(+). The catalysed reaction is (3E,5Z)-tetradecadienoyl-CoA = (2E,5Z)-tetradecadienoyl-CoA. It carries out the reaction (3E,5Z)-octadienoyl-CoA = (2E,5Z)-octadienoyl-CoA. It catalyses the reaction (3S)-hydroxydecanoyl-CoA + NAD(+) = 3-oxodecanoyl-CoA + NADH + H(+). The enzyme catalyses (3E)-decenoyl-CoA = (2E)-decenoyl-CoA. The catalysed reaction is (3Z)-hexenoyl-CoA = (2E)-hexenoyl-CoA. It carries out the reaction (3E)-hexenoyl-CoA = (2E)-hexenoyl-CoA. It catalyses the reaction (3S)-hydroxydecanoyl-CoA = (2E)-decenoyl-CoA + H2O. The enzyme catalyses (3S)-hydroxyhexanoyl-CoA = (2E)-hexenoyl-CoA + H2O. The catalysed reaction is (3S)-hydroxyhexadecanoyl-CoA + NAD(+) = 3-oxohexadecanoyl-CoA + NADH + H(+). It carries out the reaction (3S)-hydroxyhexadecanoyl-CoA = (2E)-hexadecenoyl-CoA + H2O. It catalyses the reaction (2E)-hexadecenedioyl-CoA + H2O = (3S)-hydroxyhexadecanedioyl-CoA. The enzyme catalyses (3S)-hydroxyhexadecanedioyl-CoA + NAD(+) = 3-oxohexadecanedioyl-CoA + NADH + H(+). The protein operates within lipid metabolism; fatty acid beta-oxidation. Its activity is regulated as follows. Enzyme activity enhanced by acetylation. Peroxisomal trifunctional enzyme possessing 2-enoyl-CoA hydratase, 3-hydroxyacyl-CoA dehydrogenase, and delta 3, delta 2-enoyl-CoA isomerase activities. Catalyzes two of the four reactions of the long chain fatty acids peroxisomal beta-oxidation pathway. Can also use branched-chain fatty acids such as 2-methyl-2E-butenoyl-CoA as a substrate, which is hydrated into (2S,3S)-3-hydroxy-2-methylbutanoyl-CoA. Optimal isomerase for 2,5 double bonds into 3,5 form isomerization in a range of enoyl-CoA species. Also able to isomerize both 3-cis and 3-trans double bonds into the 2-trans form in a range of enoyl-CoA species. With HSD17B4, catalyzes the hydration of trans-2-enoyl-CoA and the dehydrogenation of 3-hydroxyacyl-CoA, but with opposite chiral specificity. Regulates the amount of medium-chain dicarboxylic fatty acids which are essential regulators of all fatty acid oxidation pathways. Also involved in the degradation of long-chain dicarboxylic acids through peroxisomal beta-oxidation. This Mus musculus (Mouse) protein is Peroxisomal bifunctional enzyme.